The following is a 355-amino-acid chain: 3-dehydroquinate synthase (355 aa).

NAD(+) contacts are provided by residues 98-102 (GVVGD), 122-123 (TT), Lys-135, Lys-144, and 162-165 (TLDT). Zn(2+)-binding residues include Glu-177, His-240, and His-257.

This sequence belongs to the sugar phosphate cyclases superfamily. Dehydroquinate synthase family. Co(2+) is required as a cofactor. It depends on Zn(2+) as a cofactor. The cofactor is NAD(+).

It localises to the cytoplasm. It carries out the reaction 7-phospho-2-dehydro-3-deoxy-D-arabino-heptonate = 3-dehydroquinate + phosphate. The protein operates within metabolic intermediate biosynthesis; chorismate biosynthesis; chorismate from D-erythrose 4-phosphate and phosphoenolpyruvate: step 2/7. In terms of biological role, catalyzes the conversion of 3-deoxy-D-arabino-heptulosonate 7-phosphate (DAHP) to dehydroquinate (DHQ). In Dictyoglomus turgidum (strain DSM 6724 / Z-1310), this protein is 3-dehydroquinate synthase.